Here is a 101-residue protein sequence, read N- to C-terminus: Aspartyl/glutamyl-tRNA(Asn/Gln) amidotransferase subunit C (101 aa).

Belongs to the GatC family. In terms of assembly, heterotrimer of A, B and C subunits.

It catalyses the reaction L-glutamyl-tRNA(Gln) + L-glutamine + ATP + H2O = L-glutaminyl-tRNA(Gln) + L-glutamate + ADP + phosphate + H(+). The catalysed reaction is L-aspartyl-tRNA(Asn) + L-glutamine + ATP + H2O = L-asparaginyl-tRNA(Asn) + L-glutamate + ADP + phosphate + 2 H(+). Its function is as follows. Allows the formation of correctly charged Asn-tRNA(Asn) or Gln-tRNA(Gln) through the transamidation of misacylated Asp-tRNA(Asn) or Glu-tRNA(Gln) in organisms which lack either or both of asparaginyl-tRNA or glutaminyl-tRNA synthetases. The reaction takes place in the presence of glutamine and ATP through an activated phospho-Asp-tRNA(Asn) or phospho-Glu-tRNA(Gln). The chain is Aspartyl/glutamyl-tRNA(Asn/Gln) amidotransferase subunit C from Enterococcus faecalis (strain ATCC 700802 / V583).